Reading from the N-terminus, the 572-residue chain is Putative lysozyme-like protein (572 aa).

A signal peptide spans 1–17 (MRLLLVLLALIFSVVSA). Residues 145–165 (MSSSGSSSSSGSSGSSSSSSG) show a composition bias toward low complexity. Disordered stretches follow at residues 145–199 (MSSS…HGGG), 231–297 (SSSS…GGGV), 326–388 (ANSV…GERK), and 433–469 (AGSS…GGSG). Residues 166-185 (SSGGGSSGGGSGGGGGGSGL) show a composition bias toward gly residues. The segment covering 231–240 (SSSSADAGSS) has biased composition (low complexity). Over residues 258-282 (STGGTGGSSGSSGGGSGGGGGGSGL) the composition is skewed to gly residues. Residues 326 to 358 (ANSVSSLAGSMSSSGSSSSSGSSGSSSSSSSSG) are compositionally biased toward low complexity. The span at 359–382 (SSGGSSGGGSSGGGSGGGGGGSGL) shows a compositional bias: gly residues. Over residues 433–452 (AGSSSSSGSSGSSSSSSSSG) the composition is skewed to low complexity. Positions 453–469 (SSGGSSGGSSGGGGGSG) are enriched in gly residues.

This sequence belongs to the dictyostelium lysozyme family.

In Dictyostelium discoideum (Social amoeba), this protein is Putative lysozyme-like protein (alyL).